The following is a 298-amino-acid chain: Glycine--tRNA ligase alpha subunit (298 aa).

The protein belongs to the class-II aminoacyl-tRNA synthetase family. As to quaternary structure, tetramer of two alpha and two beta subunits.

The protein resides in the cytoplasm. The catalysed reaction is tRNA(Gly) + glycine + ATP = glycyl-tRNA(Gly) + AMP + diphosphate. This chain is Glycine--tRNA ligase alpha subunit, found in Lacticaseibacillus paracasei (strain ATCC 334 / BCRC 17002 / CCUG 31169 / CIP 107868 / KCTC 3260 / NRRL B-441) (Lactobacillus paracasei).